The following is an 83-amino-acid chain: Neurotoxin LmNaTx34.5 (83 aa).

A signal peptide spans 1–15 (FILVVIALMVIEVKS). The LCN-type CS-alpha/beta domain occupies 16–82 (DGYLMVRAGR…IWTYEKNTCS (67 aa)). Cystine bridges form between cysteine 29–cysteine 81, cysteine 33–cysteine 54, cysteine 40–cysteine 61, and cysteine 44–cysteine 63.

The protein belongs to the long (4 C-C) scorpion toxin superfamily. Sodium channel inhibitor family. Beta subfamily. In terms of tissue distribution, expressed by the venom gland.

The protein resides in the secreted. Binds voltage-independently at site-4 of sodium channels (Nav) and shift the voltage of activation toward more negative potentials thereby affecting sodium channel activation and promoting spontaneous and repetitive firing. The chain is Neurotoxin LmNaTx34.5 from Lychas mucronatus (Chinese swimming scorpion).